Here is a 257-residue protein sequence, read N- to C-terminus: uncharacterized protein (257 aa).

The span at 74–83 (LKDDLTRDNS) shows a compositional bias: basic and acidic residues. Disordered regions lie at residues 74–115 (LKDD…TQKR) and 209–257 (PYLN…YDSF). Residues 100–113 (SFQNMNSSMPSSTQ) show a composition bias toward polar residues. Residues 216 to 236 (SEDDTDSSIVEVETDYSEEEK) show a composition bias toward acidic residues.

It belongs to the asfivirus DP238L family.

This is an uncharacterized protein from Ornithodoros (relapsing fever ticks).